The following is an 864-amino-acid chain: MGSLDTVDMGQRAIDQIISELSLNEKVSLLSGVDAWHTFAIPRLGIPSIRTTDGPNGARGTRYFNGVPSACLPCGTALGATFDKDLIFSLGQLLAAECKAKGAHVLLGPTINIQRGPLGGRGFESFSEDPVLSGLAAASYCSGVQDGGVVPTLKHLVCNDQEHERVAVSALVTPRALREIYLLPFQLAIRGARPGAVMTSYNKVNGLHASESPGLIRDILRGEWGYEGAVISDWFGTYSVADAVNAGLDLEMPGPTRFRGPALMHALTSNKVSEKTLNERVRKVLELVQLASRSRVPEYAPERKLNRPEDRALLRRAAGESVVLLKNDKNDNNNSPILPLDREKKTLVIGPNADIAAYCGGGSASLLAYYTVTPRQGIADKCGADQVVFSQGCYGHKELPLLGEHLRTIETGEPGYTFRVYTEPPAASGSFKGNGSRKPVDELHMTNSSAFLMDYSHPQISGDTYYATLEGTLEPPESGVYEFGLTVAGTGLLYIDGVLVVDNKTVQRAGTSFFGIGTVEERGERYLEAGKKHHVFVEFGTAPTSNLQHHGVVSFGPGGLRLGGCRKLDTDAAIQQAVQSAAQTDQVVVCVGLSGDWESEGFDRPHMDLPPGTDELVNAVLEVQPNAVIVVQSGTPVTMPWADKAKALLQAWYGGNEAGNGIADVLFGDVNPSAKLPLTFPRELSQNPSYLSYRSERGRVLYSEDIYVGYRYYDKARQPPLFRFGHGLSYTTFHLSDLAVRETAPYAANIKESSLRVSVTVSNTGARPGAEVVLVYVRPPPATCSVGRPVRELKGYEKVMLQPGETREVSIAIPVGYATSFWDEGCDAWLSEKGLYFVEAVGTGECNTLVAPLSVQVSRMWNGL.

Asp233 is an active-site residue. Residues 411-578 form the PA14 domain; sequence TGEPGYTFRV…DTDAAIQQAV (168 aa). Asn434, Asn447, and Asn503 each carry an N-linked (GlcNAc...) asparagine glycan.

Belongs to the glycosyl hydrolase 3 family.

It localises to the secreted. It catalyses the reaction Hydrolysis of terminal, non-reducing beta-D-glucosyl residues with release of beta-D-glucose.. Its pathway is glycan metabolism; cellulose degradation. Beta-glucosidases are one of a number of cellulolytic enzymes involved in the degradation of cellulosic biomass. Catalyzes the last step releasing glucose from the inhibitory cellobiose. This chain is Probable beta-glucosidase J (bglJ), found in Neosartorya fischeri (strain ATCC 1020 / DSM 3700 / CBS 544.65 / FGSC A1164 / JCM 1740 / NRRL 181 / WB 181) (Aspergillus fischerianus).